The following is a 444-amino-acid chain: N-succinylarginine dihydrolase (444 aa).

Substrate is bound by residues 19-28, N110, and 137-138; these read AGLSFGNVAS and HR. The active site involves E174. R214 contributes to the substrate binding site. H250 is a catalytic residue. D252 and N362 together coordinate substrate. The active-site Nucleophile is the C368.

It belongs to the succinylarginine dihydrolase family. In terms of assembly, homodimer.

It catalyses the reaction N(2)-succinyl-L-arginine + 2 H2O + 2 H(+) = N(2)-succinyl-L-ornithine + 2 NH4(+) + CO2. Its pathway is amino-acid degradation; L-arginine degradation via AST pathway; L-glutamate and succinate from L-arginine: step 2/5. Its function is as follows. Catalyzes the hydrolysis of N(2)-succinylarginine into N(2)-succinylornithine, ammonia and CO(2). In Shewanella baltica (strain OS155 / ATCC BAA-1091), this protein is N-succinylarginine dihydrolase.